We begin with the raw amino-acid sequence, 3021 residues long: Genome polyprotein (3021 aa).

An N-acetylserine; by host modification is found at Ser-2. An interaction with STAT1 region spans residues 2-23; the sequence is STLPKPQRKTKRNTIRRPQDVK. Residues 2–58 form an interaction with EIF2AK2/PKR region; the sequence is STLPKPQRKTKRNTIRRPQDVKFPGGGVIYVGVYVLPRRGPRLGVRATRKTSERSQP. Positions 2 to 59 are interaction with DDX3X; that stretch reads STLPKPQRKTKRNTIRRPQDVKFPGGGVIYVGVYVLPRRGPRLGVRATRKTSERSQPR. The interval 2–75 is disordered; it reads STLPKPQRKT…PKARRSEGRS (74 aa). Residues 2–168 are Cytoplasmic-facing; sequence STLPKPQRKT…EDGINFATGN (167 aa). 2 short sequence motifs (nuclear localization signal) span residues 5–13 and 38–43; these read PKPQRKTKR and PRRGPR. A compositionally biased stretch (basic residues) spans 7 to 16; it reads PQRKTKRNTI. Ser-53 carries the phosphoserine; by host modification. Short sequence motifs (nuclear localization signal) lie at residues 58–64 and 66–71; these read PRGRRKP and PKARRS. The segment covering 58–68 has biased composition (basic residues); sequence PRGRRKPIPKA. Residues Ser-99 and Ser-116 each carry the phosphoserine; by host modification. The important for endoplasmic reticulum and mitochondrial localization stretch occupies residues 112–152; that stretch reads PRRRSRNLGKVIDTLTCGFADLMGYIPLVGAPLGGAARALA. The interaction with APOA2 stretch occupies residues 122–173; sequence VIDTLTCGFADLMGYIPLVGAPLGGAARALAHGVRALEDGINFATGNLPGCS. An important for lipid droplets localization region spans residues 164–167; that stretch reads FATG. Residues 169–189 traverse the membrane as a helical segment; sequence LPGCSFSIFLLALFSCLIHPA. The propeptide at 178–191 is ER anchor for the core protein, removed in mature form by host signal peptidase; the sequence is LLALFSCLIHPAAS. The Lumenal portion of the chain corresponds to 190–358; sequence ASLEWRNTSG…AGAHWGIIAG (169 aa). Residues Asn-196, Asn-209, and Asn-234 are each glycosylated (N-linked (GlcNAc...) asparagine; by host). An important for fusion region spans residues 265–296; it reads LVGAGTMCSALYVGDMCGPVFLVGQAFTFRPR. Residue Asn-305 is glycosylated (N-linked (GlcNAc...) asparagine; by host). A helical membrane pass occupies residues 359-379; sequence LAYYSMQGNWAKVAIIMVMFS. Over 380–731 the chain is Lumenal; sequence GVDASTHVTA…WEFVILIFLL (352 aa). Residues 385-412 are HVR1; it reads THVTAGQAARNAYGITSLFSVGAKQNLQ. 3 N-linked (GlcNAc...) (high mannose) asparagine; by host glycosylation sites follow: Asn-417, Asn-423, and Asn-430. Disulfide bonds link Cys-429/Cys-553, Cys-452/Cys-459, Cys-487/Cys-495, and Cys-504/Cys-509. Asn-448 carries N-linked (GlcNAc...) asparagine; by host glycosylation. The segment at 475–479 is HVR2; the sequence is ANITG. The N-linked (GlcNAc...) asparagine; by host glycan is linked to Asn-476. The interval 481–494 is CD81-binding 1; it reads SDDKPYCWHYAPRP. Asn-533 carries an N-linked (GlcNAc...) asparagine; by host glycan. Residues 545 to 552 are CD81-binding 2; that stretch reads PPSGRWFG. N-linked (GlcNAc...) asparagine; by host glycosylation is present at Asn-557. 4 cysteine pairs are disulfide-bonded: Cys-565/Cys-570, Cys-587/Cys-591, Cys-603/Cys-626, and Cys-613/Cys-650. Residues Asn-629 and Asn-651 are each glycosylated (N-linked (GlcNAc...) (high mannose) asparagine; by host). Cys-658 and Cys-683 are disulfide-bonded. Residues 666-677 form a PKR/eIF2-alpha phosphorylation homology domain (PePHD) region; it reads SEQHPLLHSTTE. The chain crosses the membrane as a helical span at residues 732–752; sequence LADARVCVALWLILTISQAEA. The Lumenal portion of the chain corresponds to 753-763; sequence ALENLVTLNAV. The chain crosses the membrane as a helical span at residues 764–784; the sequence is AAAGTHGIGWYLVAFCAAWYV. At 785–787 the chain is on the cytoplasmic side; the sequence is RGK. A helical transmembrane segment spans residues 788 to 809; that stretch reads LVPLVTYSLTGLWSLALLVLLL. Residues 810–819 are Lumenal-facing; that stretch reads PQRAYAWSGE. The helical transmembrane segment at 820-840 threads the bilayer; that stretch reads DSATLGAGILVLFGFFTLSPW. At 841-844 the chain is on the cytoplasmic side; the sequence is YKHW. A helical transmembrane segment spans residues 845-864; it reads IARLIWWNQYTICRCESALH. Residues 865–887 are Lumenal-facing; it reads VWVPPLLARGGRDGVILLTSLLY. A helical transmembrane segment spans residues 888–908; that stretch reads PSLIFDITKLLIAALGPLYLI. The Peptidase C18 domain occupies 905-1032; the sequence is LYLIQATITA…DYREMGWRLL (128 aa). At 909-1663 the chain is on the cytoplasmic side; that stretch reads QATITATPYF…CMSADLEVTT (755 aa). The interval 910 to 1212 is protease NS2-3; that stretch reads ATITATPYFV…PVETLSTQAR (303 aa). Cys-928 is lipidated: S-palmitoyl cysteine; by host. An interaction with host SCPS1 region spans residues 935 to 955; sequence MGGKYFQMIILSLADGSNTYL. Active-site for protease NS2 activity; shared with dimeric partner residues include His-958, Glu-978, and Cys-999. Residues 1033-1214 form the Peptidase S29 domain; it reads APITAYAQQT…ETLSTQARSP (182 aa). Catalysis depends on charge relay system; for serine protease NS3 activity residues His-1089 and Asp-1113. Positions 1129 and 1131 each coordinate Zn(2+). Residue Ser-1171 is the Charge relay system; for serine protease NS3 activity of the active site. 2 residues coordinate Zn(2+): Cys-1177 and His-1181. One can recognise a Helicase ATP-binding domain in the interval 1223–1375; that stretch reads PAVPQSYQVG…SNIEEVALGS (153 aa). 1236-1243 contributes to the ATP binding site; the sequence is APTGSGKS. Ser-1243 is a Mg(2+) binding site. The DECH box motif lies at 1322-1325; that stretch reads DDCH. The Helicase C-terminal domain occupies 1382–1544; it reads YGKAIPIACI…DLQPAETTVR (163 aa). Residues 1492–1504 are RNA-binding; it reads QRRGRTGRGRLGT. The chain crosses the membrane as a helical span at residues 1664–1684; it reads STWVLLGGVLAAVAAYCLSVG. Positions 1685–1696 are NS3-binding; that stretch reads CVVIVGHIELGG. Topologically, residues 1685-1811 are cytoplasmic; the sequence is CVVIVGHIEL…SVTSPLTTNQ (127 aa). The chain crosses the membrane as a helical span at residues 1812–1830; the sequence is TMFFNILGGWVATHLAGPQ. At 1831–1834 the chain is on the lumenal side; the sequence is ASSA. Residues 1835–1855 form a helical membrane-spanning segment; that stretch reads FVVSGLAGAAIGGIGLGRVLL. Asp-1856 is a topological domain (cytoplasmic). A helical transmembrane segment spans residues 1857-1877; sequence ILAGYGAGVSGALVAFKIMGG. The Lumenal portion of the chain corresponds to 1878–1887; sequence EPPTTEDMVN. The chain crosses the membrane as a helical span at residues 1888 to 1908; it reads LLPAILSPGALVVGVICAAIL. Over 1909–1978 the chain is Cytoplasmic; it reads RRHVGPGEGP…WINEDYPSPC (70 aa). The S-palmitoyl cysteine; by host moiety is linked to residue Cys-1978. The stretch at 1979-2008 is an intramembrane region; that stretch reads SGDWLRIIWDWVCSVVSDFKTWLSAKIMPA. Topologically, residues 2009 to 3000 are cytoplasmic; that stretch reads LPGLPFISCQ…YHSVSRARTR (992 aa). Positions 2017, 2035, 2037, and 2058 each coordinate Zn(2+). The segment at 2126 to 2214 is FKBP8-binding; that stretch reads EFFTEVDGVR…ASSSASQLSA (89 aa). The segment at 2126–2338 is transcriptional activation; the sequence is EFFTEVDGVR…PVPPPRRKRT (213 aa). Residues 2141 to 2145 form an interaction with non-structural protein 4A region; it reads PPCRP. Residues 2193-2215 form a disordered region; the sequence is ARRLARGSPPSEASSSASQLSAP. Residues 2195-2448 are interaction with host SKP2; sequence RLARGSPPSE…ALITPCSAEE (254 aa). Phosphoserine; by host is present on residues Ser-2200, Ser-2203, Ser-2207, Ser-2210, Ser-2213, and Ser-2216. Low complexity predominate over residues 2200–2215; it reads SPPSEASSSASQLSAP. Residues 2216–2255 form an ISDR region; sequence SLKATCQTHRPHPDAELVDANLLWRQEMGSNITRVESETK. The segment at 2216-2281 is interaction with EIF2AK2/PKR; it reads SLKATCQTHR…AELSAAAECF (66 aa). Residues 2255–2312 form an NS4B-binding region; that stretch reads KVVILDSFEPLRAETDDAELSAAAECFKKPPKYPPALPIWARPDYNPPLLDRWKSPDY. A V3 region spans residues 2305–2383; sequence DRWKSPDYVP…DTQSSTASKV (79 aa). Disordered regions lie at residues 2318–2338 and 2356–2419; these read HGCALPPKGAPPVPPPRRKRT and KSFP…WSTV. Residues 2328–2331 carry the SH3-binding motif; that stretch reads PPVP. Residues 2333 to 2341 carry the Nuclear localization signal motif; that stretch reads PRRKRTIQL. A Glycyl lysine isopeptide (Lys-Gly) (interchain with G-Cter in ubiquitin) cross-link involves residue Lys-2356. The segment covering 2359–2381 has biased composition (low complexity); that stretch reads PSSKPQEENSSSSGVDTQSSTAS. Phosphoserine; by host is present on residues Ser-2459 and Ser-2472. One can recognise a RdRp catalytic domain in the interval 2644–2762; the sequence is PLGFSYDTRC…VAESDGVDED (119 aa). Residues Asp-2650, Asp-2748, and Asp-2749 each coordinate Mg(2+). A helical transmembrane segment spans residues 3001 to 3021; the sequence is YLLLCLLLLTVGVGIFLLPAR.

Belongs to the hepacivirus polyprotein family. Homooligomer. Interacts with E1 (via C-terminus). Interacts with the non-structural protein 5A. Interacts (via N-terminus) with host STAT1 (via SH2 domain); this interaction results in decreased STAT1 phosphorylation and ubiquitin-mediated proteasome-dependent STAT1 degradation, leading to decreased IFN-stimulated gene transcription. Interacts with host STAT3; this interaction constitutively activates STAT3. Interacts with host LTBR receptor. Interacts with host TNFRSF1A receptor and possibly induces apoptosis. Interacts with host HNRPK. Interacts with host YWHAE. Interacts with host UBE3A/E6AP. Interacts with host DDX3X. Interacts with host APOA2. Interacts with host RXRA protein. Interacts with host SP110 isoform 3/Sp110b; this interaction sequesters the transcriptional corepressor SP110 away from the nucleus. Interacts with host CREB3 nuclear transcription protein; this interaction triggers cell transformation. Interacts with host ACY3. Interacts with host C1QR1. Interacts with host RBM24; this interaction, which enhances the interaction of the mature core protein with 5'-UTR, may inhibit viral translation and favor replication. Interacts with host EIF2AK2/PKR; this interaction induces the autophosphorylation of EIF2AK2. Part of the viral assembly initiation complex composed of NS2, E1, E2, NS3, NS4A, NS5A and the mature core protein. In terms of assembly, forms a heterodimer with envelope glycoprotein E2. Interacts with mature core protein. Interacts with protease NS2. The heterodimer E1/E2 interacts with host CLDN1; this interaction plays a role in viral entry into host cell. Interacts with host SPSB2 (via C-terminus). Part of the viral assembly initiation complex composed of NS2, E1, E2, NS3, NS4A, NS5A and the mature core protein. Interacts with host NEURL3; this interaction prevents E1 binding to glycoprotein E2. As to quaternary structure, forms a heterodimer with envelope glycoprotein E1. Interacts with host CD81 and SCARB1 receptors; these interactions play a role in viral entry into host cell. Interacts with host EIF2AK2/PKR; this interaction inhibits EIF2AK2 and probably allows the virus to evade the innate immune response. Interacts with host CD209/DC-SIGN and CLEC4M/DC-SIGNR. Interact with host SPCS1; this interaction is essential for viral particle assembly. Interacts with protease NS2. The heterodimer E1/E2 interacts with host CLDN1; this interaction plays a role in viral entry into host cell. Part of the viral assembly initiation complex composed of NS2, E1, E2, NS3, NS4A, NS5A and the mature core protein. Interacts with host SLC3A2/4F2hc; the interaction may facilitate viral entry into host cell. Interacts with human PLSCR1. Homohexamer. Homoheptamer. Interacts with protease NS2. In terms of assembly, homodimer. Interacts with host SPCS1; this interaction is essential for viral particle assembly. Interacts with envelope glycoprotein E1. Interacts with envelope glycoprotein E2. Interacts with viroporin p7. Interacts with serine protease/helicase NS3. Part of the replication complex composed of NS2, NS3, NS4A, NS4B, NS5A and the RNA-directed RNA polymerase embedded in an ER-derived membranous web. Part of the viral assembly initiation complex composed of NS2, E1, E2, NS3, NS4A, NS5A and the mature core protein. As to quaternary structure, interacts with protease NS2. Interacts with non-structural protein 4A; this interaction stabilizes the folding of NS3 serine protease. NS3-NS4A interaction is essential for NS3 activation and allows membrane anchorage of the latter. NS3/NS4A complex also prevents phosphorylation of host IRF3, thus preventing the establishment of dsRNA induced antiviral state. Interacts with host MAVS; this interaction leads to the cleavage and inhibition of host MAVS. Interacts with host TICAM1; this interaction leads to the cleavage and inhibition of host TICAM1. Interacts with host TANK-binding kinase/TBK1; this interaction results in the inhibition of the association between TBK1 and IRF3, which leads to the inhibition of IRF3 activation. Interacts with host RBM24. Part of the replication complex composed of NS2, NS3, NS4A, NS4B, NS5A and the RNA-directed RNA polymerase embedded in an ER-derived membranous web. Part of the viral assembly initiation complex composed of NS2, E1, E2, NS3, NS4A, NS5A and the mature core protein. Interacts with NS3 serine protease; this interaction stabilizes the folding of NS3 serine protease. NS3-NS4A interaction is essential for NS3 activation and allows membrane anchorage of the latter. Interacts with non-structural protein 5A (via N-terminus). Part of the replication complex composed of NS2, NS3, NS4A, NS4B, NS5A and the RNA-directed RNA polymerase embedded in an ER-derived membranous web. Part of the viral assembly initiation complex composed of NS2, E1, E2, NS3, NS4A, NS5A and the mature core protein. In terms of assembly, homomultimer. Interacts with non-structural protein NS5A. Interacts with host PLA2G4C; this interaction likely initiates the recruitment of replication complexes to lipid droplets. Interacts with host STING; this interaction disrupts the interaction between STING and TBK1 thereby suppressing the interferon signaling. Part of the replication complex composed of NS2, NS3, NS4A, NS4B, NS5A and the RNA-directed RNA polymerase embedded in an ER-derived membranous web. As to quaternary structure, monomer. Homodimer; dimerization is required for RNA-binding. Interacts with the mature core protein. Interacts (via N-terminus) with non-structural protein 4A. Interacts with non-structural protein 4B. Interacts (via region D2) with RNA-directed RNA polymerase. Part of the viral assembly initiation complex composed of NS2, E1, E2, NS3, NS4A, NS5A and the mature core protein. Part of the replication complex composed of NS2, NS3, NS4A, NS4B, NS5A and the RNA-directed RNA polymerase embedded in an ER-derived membranous web. Interacts with host GRB2. Interacts with host BIN1. Interacts with host PIK3R1. Interacts with host SRCAP. Interacts with host FKBP8. Interacts (via C-terminus) with host VAPB (via MSP domain). Interacts with host EIF2AK2/PKR; this interaction leads to disruption of EIF2AK2 dimerization by NS5A and probably allows the virus to evade the innate immune response. Interacts (via N-terminus) with host PACSIN2 (via N-terminus); this interaction attenuates protein kinase C alpha-mediated phosphorylation of PACSIN2 by disrupting the interaction between PACSIN2 and PRKCA. Interacts (via N-terminus) with host SRC kinase (via SH2 domain). Interacts with most Src-family kinases. Interacts with host IFI27 and SKP2; promotes the ubiquitin-mediated proteasomal degradation of NS5A. Interacts with host GPS2. Interacts with host TNFRSF21; this interaction allows the modulation by the virus of JNK, p38 MAPK, STAT3, and Akt signaling pathways in a DR6-dependent manner. Interacts (via N-terminus) with host CIDEB (via N-terminus); this interaction seems to regulate the association of HCV particles with APOE. Interacts with host CHKA/Choline Kinase-alpha; CHKA bridges host PI4KA and NS5A and potentiates NS5A-stimulated PI4KA activity, which then facilitates the targeting of the ternary complex to the ER for viral replication. Interacts with host SPSB2 (via C-terminus); this interaction targets NS5A for ubiquitination and degradation. Interacts with host RAB18; this interaction may promote the association of NS5A and other replicase components with lipid droplets. Interacts (via region D2) with host PPIA/CYPA; the interaction stimulates RNA-binding ability of NS5A and is dependent on the peptidyl-prolyl cis-trans isomerase activity of PPIA/CYPA. Interacts with host TRIM14; this interaction induces the degradation of NS5A. Homooligomer. Interacts with non-structural protein 5A. Interacts with host VAPB. Interacts with host PRK2/PKN2. Interacts with host HNRNPA1 and SEPT6; these interactions facilitate viral replication. Part of the replication complex composed of NS2, NS3, NS4A, NS4B, NS5A and the RNA-directed RNA polymerase. Zn(2+) serves as cofactor. Requires Mg(2+) as cofactor. Specific enzymatic cleavages in vivo yield mature proteins. The structural proteins, core, E1, E2 and p7 are produced by proteolytic processing by host signal peptidases. The core protein precursor is synthesized as a 23 kDa, which is retained in the ER membrane through the hydrophobic signal peptide. Cleavage by the signal peptidase releases the 21 kDa mature core protein. The cleavage of the core protein precursor occurs between aminoacids 176 and 188 but the exact cleavage site is not known. Some degraded forms of the core protein appear as well during the course of infection. The other proteins (p7, NS2, NS3, NS4A, NS4B, NS5A and NS5B) are cleaved by the viral proteases. Autoprocessing between NS2 and NS3 is mediated by the NS2 cysteine protease catalytic domain and regulated by the NS3 N-terminal domain. Post-translationally, phosphorylated by host PKC and PKA. In terms of processing, ubiquitinated; mediated by UBE3A and leading to core protein subsequent proteasomal degradation. Highly N-glycosylated. Post-translationally, palmitoylation is required for NS2/3 autoprocessing and E2 recruitment to membranes. In terms of processing, palmitoylated. This modification may play a role in its polymerization or in protein-protein interactions. Phosphorylated on serines in a basal form termed p56. p58 is a hyperphosphorylated form of p56. p56 and p58 coexist in the cell in roughly equivalent amounts. Hyperphosphorylation is dependent on the presence of NS4A. Host CSNK1A1/CKI-alpha or RPS6KB1 kinases may be responsible for NS5A phosphorylation. Post-translationally, tyrosine phosphorylation is essential for the interaction with host SRC. In terms of processing, ubiquitinated. Ubiquitination, most probably at Lys-2356, mediated by host IFI27 and SKP2 leads to proteasomal degradation, restricting viral infection. Ubiquitination by host TRIM22 leads to interruption of viral replication. The N-terminus is phosphorylated by host PRK2/PKN2.

It localises to the host endoplasmic reticulum membrane. The protein resides in the host mitochondrion membrane. It is found in the virion. The protein localises to the host cytoplasm. Its subcellular location is the host nucleus. It localises to the host lipid droplet. The protein resides in the virion membrane. It is found in the host mitochondrion. The protein localises to the host cell membrane. Its subcellular location is the host perinuclear region. The catalysed reaction is Hydrolysis of four peptide bonds in the viral precursor polyprotein, commonly with Asp or Glu in the P6 position, Cys or Thr in P1 and Ser or Ala in P1'.. It catalyses the reaction a ribonucleoside 5'-triphosphate + H2O = a ribonucleoside 5'-diphosphate + phosphate + H(+). The enzyme catalyses ATP + H2O = ADP + phosphate + H(+). It carries out the reaction RNA(n) + a ribonucleoside 5'-triphosphate = RNA(n+1) + diphosphate. Its activity is regulated as follows. Inhibited by the antiviral drug hexamethylene amiloride. Inhibition by amantadine appears to be genotype-dependent. Also inhibited by long-alkyl-chain iminosugar derivatives. With respect to regulation, activity is up-regulated by PRK2/PKN2-mediated phosphorylation. Its function is as follows. Packages viral RNA to form a viral nucleocapsid, and promotes virion budding. Participates in the viral particle production as a result of its interaction with the non-structural protein 5A. Binds RNA and may function as a RNA chaperone to induce the RNA structural rearrangements taking place during virus replication. Modulates viral translation initiation by interacting with viral IRES and 40S ribosomal subunit. Affects various cell signaling pathways, host immunity and lipid metabolism. Prevents the establishment of cellular antiviral state by blocking the interferon-alpha/beta (IFN-alpha/beta) and IFN-gamma signaling pathways and by blocking the formation of phosphorylated STAT1 and promoting ubiquitin-mediated proteasome-dependent degradation of STAT1. Activates STAT3 leading to cellular transformation. Regulates the activity of cellular genes, including c-myc and c-fos. May repress the promoter of p53, and sequester CREB3 and SP110 isoform 3/Sp110b in the cytoplasm. Represses cell cycle negative regulating factor CDKN1A, thereby interrupting an important check point of normal cell cycle regulation. Targets transcription factors involved in the regulation of inflammatory responses and in the immune response: suppresses TNF-induced NF-kappa-B activation, and activates AP-1. Binds to dendritic cells (DCs) via C1QR1, resulting in down-regulation of T-lymphocytes proliferation. Alters lipid metabolism by interacting with hepatocellular proteins involved in lipid accumulation and storage. Induces up-regulation of FAS promoter activity, and thereby contributes to the increased triglyceride accumulation in hepatocytes (steatosis). Functionally, forms a heterodimer with envelope glycoprotein E2, which mediates virus attachment to the host cell, virion internalization through clathrin-dependent endocytosis and fusion with host membrane. Fusion with the host cell is most likely mediated by both E1 and E2, through conformational rearrangements of the heterodimer required for fusion rather than a classical class II fusion mechanism. E1/E2 heterodimer binds host apolipoproteins such as APOB and ApoE thereby forming a lipo-viro-particle (LVP). APOE associated to the LVP allows the initial virus attachment to cell surface receptors such as the heparan sulfate proteoglycans (HSPGs), syndecan-1 (SDC1), syndecan-1 (SDC2), the low-density lipoprotein receptor (LDLR) and scavenger receptor class B type I (SCARB1). The cholesterol transfer activity of SCARB1 allows E2 exposure and binding of E2 to SCARB1 and the tetraspanin CD81. E1/E2 heterodimer binding on CD81 activates the epithelial growth factor receptor (EGFR) signaling pathway. Diffusion of the complex E1-E2-EGFR-SCARB1-CD81 to the cell lateral membrane allows further interaction with Claudin 1 (CLDN1) and occludin (OCLN) to finally trigger HCV entry. In terms of biological role, forms a heterodimer with envelope glycoprotein E1, which mediates virus attachment to the host cell, virion internalization through clathrin-dependent endocytosis and fusion with host membrane. Fusion with the host cell is most likely mediated by both E1 and E2, through conformational rearrangements of the heterodimer required for fusion rather than a classical class II fusion mechanism. The interaction between envelope glycoprotein E2 and host apolipoprotein E/APOE allows the proper assembly, maturation and infectivity of the viral particles. This interaction is probably promoted via the up-regulation of cellular autophagy by the virus. E1/E2 heterodimer binds host apolipoproteins such as APOB and APOE thereby forming a lipo-viro-particle (LVP). APOE associated to the LVP allows the initial virus attachment to cell surface receptors such as the heparan sulfate proteoglycans (HSPGs), syndecan-1 (SDC1), syndecan-1 (SDC2), the low-density lipoprotein receptor (LDLR) and scavenger receptor class B type I (SCARB1). The cholesterol transfer activity of SCARB1 allows E2 exposure and binding of E2 to SCARB1 and the tetraspanin CD81. E1/E2 heterodimer binding on CD81 activates the epithelial growth factor receptor (EGFR) signaling pathway. Diffusion of the complex E1-E2-EGFR-SCARB1-CD81 to the cell lateral membrane allows further interaction with Claudin 1 (CLDN1) and occludin (OCLN) to finally trigger HCV entry. Inhibits host EIF2AK2/PKR activation, preventing the establishment of an antiviral state. Viral ligand for CD209/DC-SIGN and CLEC4M/DC-SIGNR, which are respectively found on dendritic cells (DCs), and on liver sinusoidal endothelial cells and macrophage-like cells of lymph node sinuses. These interactions allow the capture of circulating HCV particles by these cells and subsequent facilitated transmission to permissive cells such as hepatocytes and lymphocyte subpopulations. The interaction between E2 and host amino acid transporter complex formed by SLC3A2 and SLC7A5/LAT1 may facilitate viral entry into host cell. Ion channel protein that acts as a viroporin and plays an essential role in the assembly, envelopment and secretion of viral particles. Regulates the host cell secretory pathway, which induces the intracellular retention of viral glycoproteins and favors assembly of viral particles. Creates a pore in acidic organelles and releases Ca(2+) and H(+) in the cytoplasm of infected cells, leading to a productive viral infection. High levels of cytoplasmic Ca(2+) may trigger membrane trafficking and transport of viral ER-associated proteins to viroplasms, sites of viral genome replication. This ionic imbalance induces the assembly of the inflammasome complex, which triggers the maturation of pro-IL-1beta into IL-1beta through the action of caspase-1. Targets also host mitochondria and induces mitochondrial depolarization. In addition of its role as a viroporin, acts as a lipid raft adhesion factor. Its function is as follows. Cysteine protease required for the proteolytic auto-cleavage between the non-structural proteins NS2 and NS3. The N-terminus of NS3 is required for the function of NS2 protease (active region NS2-3). Promotes the initiation of viral particle assembly by mediating the interaction between structural and non-structural proteins. Functionally, displays three enzymatic activities: serine protease with a chymotrypsin-like fold, NTPase and RNA helicase. NS3 serine protease, in association with NS4A, is responsible for the cleavages of NS3-NS4A, NS4A-NS4B, NS4B-NS5A and NS5A-NS5B. The NS3/NS4A complex prevents phosphorylation of host IRF3, thus preventing the establishment of dsRNA induced antiviral state. The NS3/NS4A complex induces host amino acid transporter component SLC3A2, thus contributing to HCV propagation. NS3 RNA helicase binds to RNA and unwinds both dsDNA and dsRNA in the 3' to 5' direction, and likely resolves RNA complicated stable secondary structures in the template strand. Binds a single ATP and catalyzes the unzipping of a single base pair of dsRNA. Inhibits host antiviral proteins TBK1 and IRF3 thereby preventing the establishment of an antiviral state. Cleaves host MAVS/CARDIF thereby preventing the establishment of an antiviral state. Cleaves host TICAM1/TRIF, thereby disrupting TLR3 signaling and preventing the establishment of an antiviral state. In terms of biological role, peptide cofactor which forms a non-covalent complex with the N-terminal of NS3 serine protease. The NS3/NS4A complex prevents phosphorylation of host IRF3, thus preventing the establishment of dsRNA induced antiviral state. The NS3/NS4A complex induces host amino acid transporter component SLC3A2, thus contributing to HCV propagation. Induces a specific membrane alteration that serves as a scaffold for the virus replication complex. This membrane alteration gives rise to the so-called ER-derived membranous web that contains the replication complex. NS4B self-interaction contributes to its function in membranous web formation. Promotes host TRIF protein degradation in a CASP8-dependent manner thereby inhibiting host TLR3-mediated interferon signaling. Disrupts the interaction between STING and TBK1 contributing to the inhibition of interferon signaling. Its function is as follows. Phosphorylated protein that is indispensable for viral replication and assembly. Both hypo- and hyperphosphorylated states are required for the viral life cycle. The hyperphosphorylated form of NS5A is an inhibitor of viral replication. Involved in RNA-binding and especially in binding to the viral genome. Zinc is essential for RNA-binding. Participates in the viral particle production as a result of its interaction with the mature viral core protein. Its interaction with host VAPB may target the viral replication complex to vesicles. Down-regulates viral IRES translation initiation. Mediates interferon resistance, presumably by interacting with and inhibiting host EIF2AK2/PKR. Prevents BIN1-induced apoptosis. Acts as a transcriptional activator of some host genes important for viral replication when localized in the nucleus. Via the interaction with host PACSIN2, modulates lipid droplet formation in order to promote virion assembly. Modulates TNFRSF21/DR6 signaling pathway for viral propagation. Functionally, RNA-dependent RNA polymerase that performs primer-template recognition and RNA synthesis during viral replication. Initiates RNA transcription/replication at a flavin adenine dinucleotide (FAD), resulting in a 5'- FAD cap on viral RNAs. In this way, recognition of viral 5' RNA by host pattern recognition receptors can be bypassed, thereby evading activation of antiviral pathways. This is Genome polyprotein from Homo sapiens (Human).